Here is a 183-residue protein sequence, read N- to C-terminus: CASP-like protein UU2 (183 aa).

Over 1-33 (MEESQQQSSKFDAPPSPYVPSRVYLAQIYWKKP) the chain is Cytoplasmic. Residues 34–54 (AIVVLRVLQFIFSLIAFSVMA) traverse the membrane as a helical segment. The Extracellular portion of the chain corresponds to 55–72 (DVLHDVQGSIKSLSYTVA). The chain crosses the membrane as a helical span at residues 73-93 (IGVLACAYALAQLSFSLWCVI). The Cytoplasmic portion of the chain corresponds to 94–118 (RGATSSAGVTPLYQYATFICDQMST). Residues 119–139 (YFLISAASATATLIDVSGVCG) traverse the membrane as a helical segment. The Extracellular portion of the chain corresponds to 140–156 (SNGSGTNLCSRSTASVT). N-linked (GlcNAc...) asparagine glycosylation occurs at N141. Residues 157 to 177 (FAFLAFLAFSASSVLTGYYLV) traverse the membrane as a helical segment. The Cytoplasmic segment spans residues 178–183 (KCILKA).

This sequence belongs to the Casparian strip membrane proteins (CASP) family. As to quaternary structure, homodimer and heterodimers.

Its subcellular location is the cell membrane. The polypeptide is CASP-like protein UU2 (Selaginella moellendorffii (Spikemoss)).